The chain runs to 218 residues: Peptide methionine sulfoxide reductase MsrA (218 aa).

The active site involves Cys-57.

Belongs to the MsrA Met sulfoxide reductase family.

It catalyses the reaction L-methionyl-[protein] + [thioredoxin]-disulfide + H2O = L-methionyl-(S)-S-oxide-[protein] + [thioredoxin]-dithiol. It carries out the reaction [thioredoxin]-disulfide + L-methionine + H2O = L-methionine (S)-S-oxide + [thioredoxin]-dithiol. Functionally, has an important function as a repair enzyme for proteins that have been inactivated by oxidation. Catalyzes the reversible oxidation-reduction of methionine sulfoxide in proteins to methionine. In Brucella melitensis biotype 1 (strain ATCC 23456 / CCUG 17765 / NCTC 10094 / 16M), this protein is Peptide methionine sulfoxide reductase MsrA.